A 400-amino-acid polypeptide reads, in one-letter code: Argininosuccinate synthase (400 aa).

Residues 10–18 (AYSGGVDTS) and alanine 38 contribute to the ATP site. Residue tyrosine 89 coordinates L-citrulline. Position 119 (glycine 119) interacts with ATP. Residues threonine 121, asparagine 125, and aspartate 126 each coordinate L-aspartate. L-citrulline is bound at residue asparagine 125. The L-citrulline site is built by arginine 129, serine 177, serine 186, glutamate 262, and tyrosine 274.

It belongs to the argininosuccinate synthase family. Type 1 subfamily. In terms of assembly, homotetramer.

The protein resides in the cytoplasm. The catalysed reaction is L-citrulline + L-aspartate + ATP = 2-(N(omega)-L-arginino)succinate + AMP + diphosphate + H(+). The protein operates within amino-acid biosynthesis; L-arginine biosynthesis; L-arginine from L-ornithine and carbamoyl phosphate: step 2/3. The protein is Argininosuccinate synthase of Nostoc punctiforme (strain ATCC 29133 / PCC 73102).